Reading from the N-terminus, the 631-residue chain is MSKVLGIDLGTTNSCMAIYEGKEAKVIPNKEGKNTTPSVVAFTDKGEVLVGDPAKRQMITNPKRTIYSVKRIMGMMCNEEKAQEAKKRLPYNIVDRNGACAVDVDGKVYTPQEISAKILMKLKEDAEAYLGQEITEAVITVPAYFNDAQRKATKEAGQIAGLNVLRIINEPTAAALAYGLDKKEAEKIVVYDLGGGTFDVTILETGDNVVEVLATGGDAFLGGDDFDNRIIDWLVDEFKKETGIDLKSDIMALQRLKEAAENAKKELSSAMETEINLPFITADQSGPKHLVKKLTRAKFESLIEDLVEKTITIANNVLKDSGLSKDEVNEVVLVGGSTRIPLVQQKVKEFFGKEPNKSVNPDEVVAVGAAIQGAVIKGDVKDVLLLDVTPLSLGIETLGGVMTKIIEKGTTIPVKKSQIFSTAEDNQPAVTIHVLQGEREMAKDNKSLGQFTLEGIPPAPRGVPQIEVTFDIDANGILTVSAKDKATGKEQKITVTGTSGLSEEEIQRMIQDAEAHKEEDRKRKELVETRNQADALAYQTEKSLKEVGNAISADERAQIEAALNDLKNVLKDENATKEQIEAKVQALTQVSHKLAEAMYKKEQGQTGGTEQGGTEQKKSGGDDDVIDAEVE.

The residue at position 197 (T197) is a Phosphothreonine; by autocatalysis. A disordered region spans residues 598–631 (MYKKEQGQTGGTEQGGTEQKKSGGDDDVIDAEVE). The span at 622–631 (DDDVIDAEVE) shows a compositional bias: acidic residues.

The protein belongs to the heat shock protein 70 family.

Its function is as follows. Acts as a chaperone. This is Chaperone protein DnaK from Nitratiruptor sp. (strain SB155-2).